We begin with the raw amino-acid sequence, 439 residues long: Mitochondrial distribution and morphology protein 12 (439 aa).

In terms of domain architecture, SMP-LTD spans 1-439; the sequence is MSIDVNWRFA…VYPSFWTFLI (439 aa). Disordered regions lie at residues 70 to 103, 185 to 274, and 354 to 386; these read YEEDDDDHTSDASEERGEEHSSRWNSTHPELNEP, GWSD…PPRM, and PEQQQQRESAGDDHRPQSRPDSSASASQKRHGG. Residues 78–91 show a composition bias toward basic and acidic residues; the sequence is TSDASEERGEEHSS. Residues 215 to 245 are compositionally biased toward polar residues; it reads DTSNSTSRPSTANTLPSHPSGSSKNSGQAAT. Composition is skewed to basic and acidic residues over residues 247 to 261 and 362 to 371; these read RNDHPSLHAGEHLED and SAGDDHRPQS.

This sequence belongs to the MDM12 family. Component of the ER-mitochondria encounter structure (ERMES) or MDM complex, composed of mmm1, mdm10, mdm12 and mdm34. A mmm1 homodimer associates with one molecule of mdm12 on each side in a pairwise head-to-tail manner, and the SMP-LTD domains of mmm1 and mdm12 generate a continuous hydrophobic tunnel for phospholipid trafficking.

Its subcellular location is the mitochondrion outer membrane. The protein localises to the endoplasmic reticulum membrane. In terms of biological role, component of the ERMES/MDM complex, which serves as a molecular tether to connect the endoplasmic reticulum (ER) and mitochondria. Components of this complex are involved in the control of mitochondrial shape and protein biogenesis, and function in nonvesicular lipid trafficking between the ER and mitochondria. Mdm12 is required for the interaction of the ER-resident membrane protein mmm1 and the outer mitochondrial membrane-resident beta-barrel protein mdm10. The mdm12-mmm1 subcomplex functions in the major beta-barrel assembly pathway that is responsible for biogenesis of all mitochondrial outer membrane beta-barrel proteins, and acts in a late step after the SAM complex. The mdm10-mdm12-mmm1 subcomplex further acts in the TOM40-specific pathway after the action of the mdm12-mmm1 complex. Essential for establishing and maintaining the structure of mitochondria and maintenance of mtDNA nucleoids. The sequence is that of Mitochondrial distribution and morphology protein 12 from Aspergillus fumigatus (strain CBS 144.89 / FGSC A1163 / CEA10) (Neosartorya fumigata).